The primary structure comprises 62 residues: Negative regulatory protein YxlE (62 aa).

The next 2 membrane-spanning stretches (helical) occupy residues 7–27 and 37–57; these read MILP…ISCI and WMWA…FFTV.

Its subcellular location is the cell membrane. Its function is as follows. Together with YxlD is important for negative regulation of sigma Y activity. The chain is Negative regulatory protein YxlE (yxlE) from Bacillus subtilis (strain 168).